An 84-amino-acid chain; its full sequence is Anthracycline acyl carrier protein DpsG (84 aa).

The Carrier domain occupies 3–80 (ELSLAELREI…SMLIFVNERL (78 aa)). An O-(pantetheine 4'-phosphoryl)serine modification is found at Ser-40.

It participates in antibiotic biosynthesis; daunorubicin biosynthesis. It functions in the pathway antibiotic biosynthesis; carminomycin biosynthesis. The protein operates within antibiotic biosynthesis; rhodomycin biosynthesis. Its pathway is antibiotic biosynthesis; aclacinomycin biosynthesis. Its function is as follows. Involved in the biosynthesis of aklanonate which is an important precursor common to the formation of the clinically significant anthracyclines such as carminomycin, daunorubicin (daunomycin), rhodomycin, aclacinomycin T (aklavin) and aclacinomycin A (aclarubicin). These compounds are aromatic polyketide antibiotics that exhibit high cytotoxicity and are widely applied in the chemotherapy of a variety of cancers. This Streptomyces peucetius protein is Anthracycline acyl carrier protein DpsG (dpsG).